A 219-amino-acid polypeptide reads, in one-letter code: 2-hydroxy-3-keto-5-methylthiopentenyl-1-phosphate phosphatase (219 aa).

Belongs to the HAD-like hydrolase superfamily. MtnX family.

The enzyme catalyses 2-hydroxy-5-methylsulfanyl-3-oxopent-1-enyl phosphate + H2O = 1,2-dihydroxy-5-(methylsulfanyl)pent-1-en-3-one + phosphate. It participates in amino-acid biosynthesis; L-methionine biosynthesis via salvage pathway; L-methionine from S-methyl-5-thio-alpha-D-ribose 1-phosphate: step 4/6. Dephosphorylates 2-hydroxy-3-keto-5-methylthiopentenyl-1-phosphate (HK-MTPenyl-1-P) yielding 1,2-dihydroxy-3-keto-5-methylthiopentene (DHK-MTPene). This chain is 2-hydroxy-3-keto-5-methylthiopentenyl-1-phosphate phosphatase, found in Bacillus cereus (strain 03BB102).